The following is a 336-amino-acid chain: Fructose-1,6-bisphosphatase class 1 (336 aa).

Mg(2+) contacts are provided by E91, D114, L116, and D117. Residues 117–120, N210, Y243, and K273 contribute to the substrate site; that span reads DGSS. E279 contacts Mg(2+).

This sequence belongs to the FBPase class 1 family. As to quaternary structure, homotetramer. Mg(2+) is required as a cofactor.

The protein resides in the cytoplasm. It catalyses the reaction beta-D-fructose 1,6-bisphosphate + H2O = beta-D-fructose 6-phosphate + phosphate. It participates in carbohydrate biosynthesis; gluconeogenesis. The polypeptide is Fructose-1,6-bisphosphatase class 1 (Dichelobacter nodosus (strain VCS1703A)).